The primary structure comprises 192 residues: RNA-free ribonuclease P (192 aa).

It belongs to the HARP family.

It carries out the reaction Endonucleolytic cleavage of RNA, removing 5'-extranucleotides from tRNA precursor.. RNA-free RNase P that catalyzes the removal of the 5'-leader sequence from pre-tRNA to produce the mature 5'-terminus. The polypeptide is RNA-free ribonuclease P (Alkalilimnicola ehrlichii (strain ATCC BAA-1101 / DSM 17681 / MLHE-1)).